Here is a 326-residue protein sequence, read N- to C-terminus: MNSNQGTVGSDPVILATAGYDHTVRFWQAHSGICTRTVQHQDSQVNSLEVTPDRSMIAAAGYQHIRMYDLNSNNPNPVINYDGVSKNITSVGFHEDGRWMYTGGEDCMARIWDLRSRNLQCQRIFQVNAPINCVFLHPNQAELIVGDQSGAIHIWDLKTDQNEQLIPETDVSINSVHIDPDASYMAAVNSSGNCFVWNLTGGLGEDLTQLIPKTKIPAHKRCALKCKFSPDSTLLATCSADQTCKIWRTSNFSLMTELSIKSNNPGETSRGWMWDCAFSGDSQYIVTASSDNLARLWCVETGEIKREYSGHQKAVVCLAFNDSVLG.

7 WD repeats span residues 1 to 37, 40 to 80, 83 to 122, 126 to 165, 168 to 207, 218 to 257, and 268 to 309; these read MNSN…CTRT, HQDS…PVIN, GVSK…LQCQ, QVNA…NEQL, ETDV…GEDL, AHKR…LMTE, and TSRG…REYS.

It belongs to the WD repeat LST8 family. In terms of assembly, part of the mechanistic target of rapamycin complex 1 (mTORC1) which contains MTOR, MLST8 and RPTOR. Component of the mechanistic target of rapamycin complex 2 (mTORC2), consisting in two heterotretramers composed of MTOR, MLST8, RICTOR and MAPKAP1/SIN1.

The protein resides in the lysosome membrane. Its subcellular location is the cytoplasm. Subunit of both mTORC1 and mTORC2, which regulates cell growth and survival in response to nutrient and hormonal signals. mTORC1 is activated in response to growth factors or amino acids. In response to nutrients, mTORC1 is recruited to the lysosome membrane and promotes protein, lipid and nucleotide synthesis by phosphorylating several substrates, such as ribosomal protein S6 kinase (RPS6KB1 and RPS6KB2) and EIF4EBP1 (4E-BP1). In the same time, it inhibits catabolic pathways by phosphorylating the autophagy initiation components ULK1 and ATG13, as well as transcription factor TFEB, a master regulators of lysosomal biogenesis and autophagy. The mTORC1 complex is inhibited in response to starvation and amino acid depletion. Within mTORC1, MLST8 interacts directly with MTOR and enhances its kinase activity. In nutrient-poor conditions, stabilizes the MTOR-RPTOR interaction and favors RPTOR-mediated inhibition of MTOR activity. As part of the mTORC2 complex, transduces signals from growth factors to pathways involved in proliferation, cytoskeletal organization, lipogenesis and anabolic output. mTORC2 is also activated by growth factors, but seems to be nutrient-insensitive. In response to growth factors, mTORC2 phosphorylates and activates AGC protein kinase family members, including AKT (AKT1, AKT2 and AKT3), PKC (PRKCA, PRKCB and PRKCE) and SGK1. mTORC2 functions upstream of Rho GTPases to regulate the actin cytoskeleton, probably by activating one or more Rho-type guanine nucleotide exchange factors. mTORC2 promotes the serum-induced formation of stress-fibers or F-actin. Within mTORC2, MLST8 acts as a bridge between MAPKAP1/SIN1 and MTOR. In Xenopus tropicalis (Western clawed frog), this protein is Target of rapamycin complex subunit lst8 (mlst8).